Here is a 268-residue protein sequence, read N- to C-terminus: uncharacterized protein (268 aa).

3 helical membrane-spanning segments follow: residues 169-189 (AIIYVFMCLFFSLFWFYQGFA), 190-210 (GVKTSILTGTAEIGLAILWLL), and 225-245 (IFAGFACLGSEIFMWVLLSVF).

It is found in the cell membrane. This is an uncharacterized protein from Bacillus subtilis (strain 168).